Here is an 870-residue protein sequence, read N- to C-terminus: DNA mismatch repair protein MutS (870 aa).

629–636 contacts ATP; that stretch reads GPNMGGKS.

Belongs to the DNA mismatch repair MutS family.

This protein is involved in the repair of mismatches in DNA. It is possible that it carries out the mismatch recognition step. This protein has a weak ATPase activity. This is DNA mismatch repair protein MutS from Polaromonas naphthalenivorans (strain CJ2).